Here is a 387-residue protein sequence, read N- to C-terminus: Probable G-protein coupled receptor 173 (387 aa).

Residues 1–40 (MANGNASSDGPGNPLAAVVSTTGGVMGGAPSSAVSTYVKL) lie on the Extracellular side of the membrane. Asparagine 5 carries N-linked (GlcNAc...) asparagine glycosylation. The helical transmembrane segment at 41–61 (VLLGLIICISLVGNLVVSLLV) threads the bilayer. Residues 62-87 (LRDRALHKAPYYFLLDLCLADTIRSA) are Cytoplasmic-facing. Residues 88-108 (VCFPFVLVSIKNGSAWTYSVL) traverse the membrane as a helical segment. Residues 109 to 111 (SCK) are Extracellular-facing. Cysteine 110 and cysteine 188 are disulfide-bonded. A helical transmembrane segment spans residues 112–132 (VVAFMAVLFCFHAAFMLFCIS). Residues 133 to 153 (VTRYMAIAHHRFYSKRMTFWT) lie on the Cytoplasmic side of the membrane. Residues 154–174 (CVAVVCMVWTLSVAMAFPPVF) traverse the membrane as a helical segment. Residues 175 to 202 (DVGTYKFIREEDQCIFEHRYFKANDTLG) are Extracellular-facing. Asparagine 198 carries N-linked (GlcNAc...) asparagine glycosylation. The chain crosses the membrane as a helical span at residues 203–223 (FMLMLAVLILATHVVYMKLLL). The Cytoplasmic portion of the chain corresponds to 224–301 (FEYKHRKMKP…FKAEKQLGRM (78 aa)). A helical membrane pass occupies residues 302-322 (FYVITLFFLVLWSPYIVACYW). At 323–335 (RVFVKACTIPHRY) the chain is on the extracellular side. A helical membrane pass occupies residues 336-356 (LSTTVWMSFAQAGVNPIICFF). Topologically, residues 357 to 387 (LNKDLKKGLLAHLPPCCRTPPQLPREPYCVM) are cytoplasmic.

Belongs to the G-protein coupled receptor 1 family.

It is found in the cell membrane. Its function is as follows. Is a receptor for the SMIM20 derived peptides Phoenixin-14 and Phoenixin-20. It mediates the Phoenixin-14 and Phoenixin-20 augmentation of gonadotropin-releasing hormone (GNRH) signaling in the hypothalamus and pituitary gland. In the ovary, it mediates the effects of Phoenixin-14 and Phoenixin-20 induced granulosa cell proliferation during follicular growth. The sequence is that of Probable G-protein coupled receptor 173 (gpr173) from Danio rerio (Zebrafish).